We begin with the raw amino-acid sequence, 115 residues long: Regulator of ribonuclease activity B (115 aa).

Belongs to the RraB family. Interacts with the C-terminal region of Rne.

It is found in the cytoplasm. In terms of biological role, globally modulates RNA abundance by binding to RNase E (Rne) and regulating its endonucleolytic activity. Can modulate Rne action in a substrate-dependent manner by altering the composition of the degradosome. The protein is Regulator of ribonuclease activity B of Aeromonas hydrophila subsp. hydrophila (strain ATCC 7966 / DSM 30187 / BCRC 13018 / CCUG 14551 / JCM 1027 / KCTC 2358 / NCIMB 9240 / NCTC 8049).